The following is a 198-amino-acid chain: Nucleoid occlusion factor SlmA (198 aa).

The 62-residue stretch at R9 to L70 folds into the HTH tetR-type domain. The segment at residues T33–F52 is a DNA-binding region (H-T-H motif). The stretch at E117–R144 forms a coiled coil.

The protein belongs to the nucleoid occlusion factor SlmA family. As to quaternary structure, homodimer. Interacts with FtsZ.

It localises to the cytoplasm. The protein resides in the nucleoid. Its function is as follows. Required for nucleoid occlusion (NO) phenomenon, which prevents Z-ring formation and cell division over the nucleoid. Acts as a DNA-associated cell division inhibitor that binds simultaneously chromosomal DNA and FtsZ, and disrupts the assembly of FtsZ polymers. SlmA-DNA-binding sequences (SBS) are dispersed on non-Ter regions of the chromosome, preventing FtsZ polymerization at these regions. The sequence is that of Nucleoid occlusion factor SlmA from Edwardsiella ictaluri (strain 93-146).